The following is a 249-amino-acid chain: uncharacterized protein (249 aa).

A divalent metal cation is bound by residues His10, His12, Glu95, His129, His150, and Asp198.

This sequence belongs to the metallo-dependent hydrolases superfamily. TatD-type hydrolase family. Requires a divalent metal cation as cofactor.

This is an uncharacterized protein from Methanocaldococcus jannaschii (strain ATCC 43067 / DSM 2661 / JAL-1 / JCM 10045 / NBRC 100440) (Methanococcus jannaschii).